The primary structure comprises 462 residues: Anthranilate synthase component 1 (462 aa).

L-tryptophan-binding positions include serine 37 and 244–246 (PYM). 279 to 280 (GT) is a binding site for chorismate. Glutamate 306 serves as a coordination point for Mg(2+). Chorismate-binding positions include tyrosine 394, arginine 414, 428 to 430 (GAG), and glycine 430. Glutamate 443 lines the Mg(2+) pocket.

Belongs to the anthranilate synthase component I family. Heterotetramer consisting of two non-identical subunits: a beta subunit (TrpG) and a large alpha subunit (TrpE). Mg(2+) serves as cofactor.

The enzyme catalyses chorismate + L-glutamine = anthranilate + pyruvate + L-glutamate + H(+). It participates in amino-acid biosynthesis; L-tryptophan biosynthesis; L-tryptophan from chorismate: step 1/5. Its activity is regulated as follows. Feedback inhibited by tryptophan. Part of a heterotetrameric complex that catalyzes the two-step biosynthesis of anthranilate, an intermediate in the biosynthesis of L-tryptophan. In the first step, the glutamine-binding beta subunit (TrpG) of anthranilate synthase (AS) provides the glutamine amidotransferase activity which generates ammonia as a substrate that, along with chorismate, is used in the second step, catalyzed by the large alpha subunit of AS (TrpE) to produce anthranilate. In the absence of TrpG, TrpE can synthesize anthranilate directly from chorismate and high concentrations of ammonia. The polypeptide is Anthranilate synthase component 1 (trpE) (Thermus thermophilus (strain ATCC 27634 / DSM 579 / HB8)).